Reading from the N-terminus, the 184-residue chain is Putative YfeABCD regulator YfeE (184 aa).

A run of 3 helical transmembrane segments spans residues 15–35 (IAGW…IINF), 84–104 (LSAG…GLSL), and 162–182 (ILPS…GIMI).

The protein to E.coli YniB.

The protein localises to the cell membrane. Functionally, putative regulator of YfeABCD, an ABC transporter locus involved in inorganic iron transport. This is Putative YfeABCD regulator YfeE (yfeE) from Yersinia pestis.